Reading from the N-terminus, the 74-residue chain is Antitoxin VapB39 (74 aa).

In terms of biological role, antitoxin component of a type II toxin-antitoxin (TA) system. This Mycobacterium tuberculosis (strain CDC 1551 / Oshkosh) protein is Antitoxin VapB39 (vapB39).